The following is a 970-amino-acid chain: MTLVYEKSSFVLIMAQIAEAQNIMTRSTSSNDLLSTSAGSPPSPTSAAILLSSSPSPTITIASLPSGLNIVSNPNGNPAINVVLLNVNLNKEEEKMTLGQLLACFPEVPSNIPIQLNPNQHKLRRDTIVSQPVITSKQSSLFETSKQSNIPLSASVTNLQTLNKEKENYNLLNSSTNSLHSLIITPPTSNNTSSNNFVGGNIINSSSEDSILPPPHIITTTTTTTTSLPPRSPMPLPSSNCINIPNNINIPDNISESSTCSLSSNASNNYPQSPPKYNNFEINQNNNNSISLSKSQSLDNILTNSNNNNNNEITISSNIPIPLPPQSSSPPPTRNNQSSPSPSSPQQQNIMPTPPSTSLTPPQSPTLSPSSSTHSTPTQTTTTIKLPPSSPPSTISQNNARKTQIPTTTTTTTTTTTTTSTTSTTSPNPVVNNKNLNTPSSSFSPTKRLTIAFGSLTRSSNTPPPESSIVPIRWEINLNQIKIASTSTSNTNTVSSQNLINSSNTNNNNNNNNNNNNNNNNNNNNNNNNNNNNNSGNNNNNNNNNNNNNNQLYEQYYKLCKGEFQQNTSLYNKTFNQLLDVDINTSLSLLDKCYDSILKSNGIGLLSSKDQYLSTQSKEKDPNRVKSLLSVVKNAVSEDILNVKPSKTMLYFSNFGKTIPINLEVIDECILNNFSSKKVKFKVLMGPPSKTHTINVSEKEGFIGKKSSITLNFSLILKSSIKLRRVVIIEIEGGVRYFILVQVESNKTAFGQPIEDSELVEDNTSFGPMLVPRALVILKQAFFGCNAHLTESIFRLPPANDSEYNIVKDRVNREAIGTTEPHCIATLIKVFFRELPNLLLNDIDPEIFLNFKPTAQSADTASSAATANSSSSGSGNGNSSPNNDDPTMDPVFIVNLIEEKRRSTFLWLVDLLAEVTKFESSNKMNSKSLSIIFSPNLYFAPSICSAENSFAISGKVVSFILELIQFNKSL.

Positions 1 to 20 (MTLVYEKSSFVLIMAQIAEA) are cleaved as a signal peptide. Disordered stretches follow at residues 30–49 (SNDL…SAAI), 258–285 (STCS…INQN), 312–446 (EITI…FSPT), 487–550 (STSN…NNNN), and 860–886 (TASS…NDDP). 2 stretches are compositionally biased toward low complexity: residues 35–49 (STSA…SAAI) and 258–269 (STCSLSSNASNN). Residues 321–333 (IPLPPQSSSPPPT) are compositionally biased toward pro residues. Low complexity predominate over residues 334-383 (RNNQSSPSPSSPQQQNIMPTPPSTSLTPPQSPTLSPSSSTHSTPTQTTTT). Polar residues predominate over residues 392–406 (PSTISQNNARKTQIP). A compositionally biased stretch (low complexity) spans 407 to 426 (TTTTTTTTTTTTTSTTSTTS). Polar residues predominate over residues 427 to 446 (PNPVVNNKNLNTPSSSFSPT). Residues 754–970 (IEDSELVEDN…LELIQFNKSL (217 aa)) enclose the Rho-GAP domain. Over residues 860 to 885 (TASSAATANSSSSGSGNGNSSPNNDD) the composition is skewed to low complexity.

Its subcellular location is the cytoplasm. Its function is as follows. Rho GTPase-activating protein involved in the signal transduction pathway. The protein is Rho GTPase-activating protein gacK (gacK) of Dictyostelium discoideum (Social amoeba).